The sequence spans 259 residues: Methyltransferase afvD (259 aa).

It belongs to the class I-like SAM-binding methyltransferase superfamily.

The protein operates within secondary metabolite biosynthesis. In terms of biological role, methyltransferase; part of the gene cluster that mediates the biosynthesis of aflavarin, a bicoumarin that exhibits anti-insectan activity against the fungivorous beetle C.hemipterus. This chain is Methyltransferase afvD, found in Aspergillus flavus (strain ATCC 200026 / FGSC A1120 / IAM 13836 / NRRL 3357 / JCM 12722 / SRRC 167).